The following is a 134-amino-acid chain: Profilin-3 (134 aa).

Cys-13 and Cys-118 are disulfide-bonded. Residues 84–100 (AVIRGKKGSGGITIKKT) carry the Involved in PIP2 interaction motif. Thr-114 is subject to Phosphothreonine.

It belongs to the profilin family. In terms of assembly, occurs in many kinds of cells as a complex with monomeric actin in a 1:1 ratio. In terms of processing, phosphorylated by MAP kinases.

Its subcellular location is the cytoplasm. It localises to the cytoskeleton. Its function is as follows. Binds to actin and affects the structure of the cytoskeleton. At high concentrations, profilin prevents the polymerization of actin, whereas it enhances it at low concentrations. In Olea europaea (Common olive), this protein is Profilin-3.